Consider the following 762-residue polypeptide: Poly(A) RNA polymerase CID14 (762 aa).

Residues 1-123 (MPTGFQPAES…KKEEQKAAER (123 aa)) form a disordered region. The span at 50–62 (KKNKKDKKKKGSK) shows a compositional bias: basic residues. Basic and acidic residues-rich tracts occupy residues 65–75 (QPVDEPDKKDG) and 99–123 (RKRD…AAER). Residue serine 189 coordinates ATP. Mg(2+) is bound by residues aspartate 200 and aspartate 202. 4 residues coordinate ATP: glycine 266, lysine 291, serine 309, and tyrosine 310. The region spanning 336 to 393 (NLGTLLIEFFELFGRNFNYNDVGISIRRGGFYFSKASRGWMKGQSFLLSIEDPQDKDN) is the PAP-associated domain. A disordered region spans residues 482 to 762 (SIPLGADPKP…LGQSSGDMSD (281 aa)). A compositionally biased stretch (acidic residues) spans 536 to 549 (VEDDELESDDDSDS). The span at 572 to 581 (RTANSRSTSR) shows a compositional bias: polar residues. Lysine 610 contacts ATP. 2 stretches are compositionally biased toward acidic residues: residues 677 to 687 (GEEEEEIDSDE) and 697 to 707 (SDGDLGSEDEI). Residues 753–762 (LGQSSGDMSD) are compositionally biased toward polar residues.

It belongs to the DNA polymerase type-B-like family. As to quaternary structure, component of the TRAMP complex. Mg(2+) is required as a cofactor. The cofactor is Mn(2+).

It is found in the nucleus. The protein resides in the nucleolus. It carries out the reaction RNA(n) + ATP = RNA(n)-3'-adenine ribonucleotide + diphosphate. Its function is as follows. Required for 3' polyadenylation of the 5.8S and 25S rRNAs as a prelude to their degradation in the exosome. Involved in the nucleolar organization to ensure faithful chromosome segregation during mitosis. The polypeptide is Poly(A) RNA polymerase CID14 (Cryptococcus neoformans var. neoformans serotype D (strain JEC21 / ATCC MYA-565) (Filobasidiella neoformans)).